The sequence spans 197 residues: Guanylate kinase (197 aa).

Residues 10–187 (GSLFIVSAPA…AYQVLRSILI (178 aa)) form the Guanylate kinase-like domain. Residue 17-24 (APAGTGKT) coordinates ATP.

Belongs to the guanylate kinase family.

The protein localises to the cytoplasm. It carries out the reaction GMP + ATP = GDP + ADP. Its function is as follows. Essential for recycling GMP and indirectly, cGMP. The sequence is that of Guanylate kinase from Protochlamydia amoebophila (strain UWE25).